Here is a 524-residue protein sequence, read N- to C-terminus: MDITNRQAVLKNFLGNSPDWYKLAIMGFLIINPLVFFFVSPFVAGWMLVIEFIFTLAMALKCYPLQPGGLLAIQAVAIGMTSPHQVAEEIANNLEVLLLLVFMVAGIYFMKQLLLFVFTKLLLNIRSKTILSLAFCLASAFLSAFLDALTVIAVVISVSVGFYTIYHNVTSNHSDKDITDDSGIDNQDSHETLEQFRAFLRSLMMHAGVGTALGGVMTMVGEPQNLIIAKSAGWNFADFFIRMLPVTLPVFIFGLLVCLLVEKFKLFGYGAQLPERVRQVLTEYDQQANAKRTKQEKMKLIVQAIIGVWLVLALALHLAEVGLVGLSVIILATSFCGITNEHSLGKAFQEALPFTALLTVFFAVVAVIIEQSLFTPIIQFVLQASPSAQLSLFYLFNGLLSSVSDNVFVGTVYINEARSAFEHGIVSLQQFELLAVAINTGTNLPSVATPNGQAAFLFLLTSALAPLIRLSYGRMVYMALPYTLVMTIVGLLGVEFLLVPMTEWLTQAGWISLPHITNGVAIPH.

9 consecutive transmembrane segments (helical) span residues 13-33 (FLGN…IINP), 98-118 (LLLV…LFVF), 140-160 (AFLS…SVSV), 239-259 (FFIR…LVCL), 304-324 (AIIG…VGLV), 325-345 (GLSV…HSLG), 358-378 (LTVF…TPII), 448-468 (ATPN…APLI), and 479-499 (ALPY…FLLV).

The protein belongs to the NhaB Na(+)/H(+) (TC 2.A.34) antiporter family.

It localises to the cell inner membrane. It catalyses the reaction 2 Na(+)(in) + 3 H(+)(out) = 2 Na(+)(out) + 3 H(+)(in). In terms of biological role, na(+)/H(+) antiporter that extrudes sodium in exchange for external protons. This is Na(+)/H(+) antiporter NhaB from Yersinia pestis (strain Pestoides F).